We begin with the raw amino-acid sequence, 355 residues long: Blue-sensitive opsin (355 aa).

Residues 1 to 36 (MNGTEGINFYVPLSNKTGLVRSPFEYPQYYLAEPWK) lie on the Extracellular side of the membrane. 2 N-linked (GlcNAc...) asparagine glycosylation sites follow: N2 and N15. A helical membrane pass occupies residues 37–61 (YKVVCCYIFFLIFTGLPINILTLLV). Residues 62–73 (TFKHKKLRQPLN) lie on the Cytoplasmic side of the membrane. A helical transmembrane segment spans residues 74–98 (YILVNLAVADLFMACFGFTVTFYTA). Residues 99-113 (WNGYFIFGPIGCAIE) are Extracellular-facing. C110 and C187 are joined by a disulfide. Residues 114 to 133 (GFFATLGGQVALWSLVVLAI) traverse the membrane as a helical segment. Residues 134 to 152 (ERYIVVCKPMGNFRFSATH) lie on the Cytoplasmic side of the membrane. The chain crosses the membrane as a helical span at residues 153 to 176 (ALMGISFTWFMSFSCAAPPLLGWS). The Extracellular portion of the chain corresponds to 177 to 202 (RYIPEGMQCSCGPDYYTLNPDYHNES). N200 carries N-linked (GlcNAc...) asparagine glycosylation. Residues 203 to 230 (YVLYMFGVHFVIPVVVIFFSYGRLICKV) traverse the membrane as a helical segment. At 231–252 (REAAAQQQESASTQKAEREVTR) the chain is on the cytoplasmic side. Residues 253–276 (MVILMVLGFLLAWTPYAMVAFWIF) form a helical membrane-spanning segment. At 277-284 (TNKGVDFS) the chain is on the extracellular side. A helical membrane pass occupies residues 285 to 309 (ATLMSVPAFFSKSSSLYNPIIYVLM). K296 is modified (N6-(retinylidene)lysine). Over 310–355 (NKQFRNCMITTICCGKNPFGDEDVSSSVSQSKTEVSSVSSSQVSPA) the chain is Cytoplasmic. Residues C322 and C323 are each lipidated (S-palmitoyl cysteine). Residues 332-355 (DVSSSVSQSKTEVSSVSSSQVSPA) form a disordered region. Low complexity predominate over residues 334-355 (SSSVSQSKTEVSSVSSSQVSPA).

This sequence belongs to the G-protein coupled receptor 1 family. Opsin subfamily. In terms of processing, phosphorylated on some or all of the serine and threonine residues present in the C-terminal region.

It localises to the membrane. In terms of biological role, visual pigments are the light-absorbing molecules that mediate vision. They consist of an apoprotein, opsin, covalently linked to cis-retinal. This opsin uses a vitamin A2 chromophore. This is Blue-sensitive opsin from Anolis carolinensis (Green anole).